Here is a 202-residue protein sequence, read N- to C-terminus: Glycolipid transfer protein 1 (202 aa).

The a ganglioside GM3 (d18:1(4E)) site is built by aspartate 52, asparagine 56, tryptophan 99, and histidine 138.

The protein belongs to the GLTP family.

Its function is as follows. May be involved in glycolipids transfer. This chain is Glycolipid transfer protein 1, found in Arabidopsis thaliana (Mouse-ear cress).